The following is a 640-amino-acid chain: Probable potassium transport system protein Kup 3 (640 aa).

Residues 1 to 15 (MTVDAAATPAEAPAT) show a composition bias toward low complexity. The interval 1 to 20 (MTVDAAATPAEAPATNGHGD) is disordered. 12 helical membrane passes run 30–50 (LTLGSIGVVYGDIGTSPLYAL), 71–91 (VISLILWALIVVVTLKYVVIL), 117–137 (ASIIVLLGIISGALFYGDAVI), 155–175 (AAFDPYVVPLTVIILAALFAV), 183–203 (VAAFFGPIMLIWFLVIGIAAF), 224–244 (FMLHHGIVGFITLGAVFLAVT), 265–285 (WLFVVLPSLALNYLGQGALII), 294–314 (PFFLMFPEWALIPMVALATVA), 363–383 (LLLASVVLLVLLFKSSSALAS), 385–405 (YGISVTGTMVVTAMMGFVVIW), 410–430 (WSPLAAGALIAPFLFLDLTFL), and 437–457 (VLEGGWVPLALGGFVMTLMYT).

It belongs to the HAK/KUP transporter (TC 2.A.72) family.

The protein resides in the cell inner membrane. It catalyses the reaction K(+)(in) + H(+)(in) = K(+)(out) + H(+)(out). Transport of potassium into the cell. Likely operates as a K(+):H(+) symporter. The chain is Probable potassium transport system protein Kup 3 from Bradyrhizobium sp. (strain BTAi1 / ATCC BAA-1182).